Consider the following 114-residue polypeptide: Amphinase-3 (114 aa).

Catalysis depends on H15, which acts as the Proton acceptor. An N-linked (GlcNAc...) asparagine glycan is attached at N25. 4 disulfides stabilise this stretch: C26-C79, C41-C85, C59-C100, and C97-C114. 42 to 46 serves as a coordination point for substrate; that stretch reads KPINT. 2 N-linked (GlcNAc...) asparagine glycosylation sites follow: N67 and N91. The active-site Proton donor is H107.

This sequence belongs to the pancreatic ribonuclease family. In terms of assembly, monomer. There are at least five different forms arising from glycan heterogeneity.

Its subcellular location is the secreted. Endonuclease, hydrolyzes highly polymerized RNA, poly(U) and poly(C), and the dinucleotides CpA and UpA. More active towards rCA than rUA or rUG. Has cytotoxic activity against cultured human submaxillary gland carcinoma cells. This Lithobates pipiens (Northern leopard frog) protein is Amphinase-3.